We begin with the raw amino-acid sequence, 91 residues long: Probable translocation protein y4yM (91 aa).

Transmembrane regions (helical) follow at residues 15–35 and 55–75; these read VVFMIWILPPLIASVIVGLTI and LLVVVAVIGLFAPVLSAPLIE.

Belongs to the FliQ/MopD/SpaQ family.

The protein resides in the cell membrane. Its function is as follows. Could be involved in the secretion of an unknown factor. The sequence is that of Probable translocation protein y4yM from Sinorhizobium fredii (strain NBRC 101917 / NGR234).